The chain runs to 302 residues: MATDDFFSLQREYWRQVAESDGFDIESVQIPPSMYGRINGLIPHNCEINTPLPYRVLGKHYAKLGLHRYNMLKGTKFEFGRLMKFNMLQNCVASFYITLEAYDYGVPGTSHPQTFQVRIDEKIFGSLDLTVSIARRTTDEVTTKKPFIHHYHGGAVADNIIFKGELPDWPSDDVLKDRERFYVIMNESEWRATAWISLYLELVLCAHDKFITNTDLSRLSIEKVAIETSIGDALLYERLEAKSANVYIWFKRLEKPRVPQQVFVTGMDVERKAIIRRVMDSTGYLTLVGKLCGGVTKVRQFN.

Position 2 is an N-acetylalanine (A2).

The protein belongs to the UPF0725 (EMB2204) family.

The protein is UPF0725 protein At1g23960 of Arabidopsis thaliana (Mouse-ear cress).